The primary structure comprises 418 residues: AP-3 complex subunit mu-1 (418 aa).

One can recognise an MHD domain in the interval 176 to 417 (NNEAYFDVVE…ITKAGKFQVR (242 aa)).

Belongs to the adaptor complexes medium subunit family. In terms of assembly, adaptor protein complex 3 (AP-3) is a heterotetramer composed of two large adaptins (delta-type subunit AP3D1 and beta-type subunit AP3B1 or AP3B2), a medium adaptin (mu-type subunit AP3M1 or AP3M2) and a small adaptin (sigma-type subunit APS1 or AP3S2). Interacts with AGAP1. AP-3 associates with the BLOC-1 complex.

The protein resides in the golgi apparatus. Its subcellular location is the cytoplasmic vesicle membrane. Its function is as follows. Part of the AP-3 complex, an adaptor-related complex which is not clathrin-associated. The complex is associated with the Golgi region as well as more peripheral structures. It facilitates the budding of vesicles from the Golgi membrane and may be directly involved in trafficking to lysosomes. In concert with the BLOC-1 complex, AP-3 is required to target cargos into vesicles assembled at cell bodies for delivery into neurites and nerve terminals. This is AP-3 complex subunit mu-1 (Ap3m1) from Rattus norvegicus (Rat).